Reading from the N-terminus, the 341-residue chain is Methionine import ATP-binding protein MetN (341 aa).

Residues 2–237 (IELCGLKKSF…PESLARKMLY (236 aa)) enclose the ABC transporter domain. 34-41 (GKSGAGKS) lines the ATP pocket.

Belongs to the ABC transporter superfamily. Methionine importer (TC 3.A.1.24) family. As to quaternary structure, the complex is composed of two ATP-binding proteins (MetN), two transmembrane proteins (MetI) and a solute-binding protein (MetQ).

It localises to the cell inner membrane. The enzyme catalyses L-methionine(out) + ATP + H2O = L-methionine(in) + ADP + phosphate + H(+). It catalyses the reaction D-methionine(out) + ATP + H2O = D-methionine(in) + ADP + phosphate + H(+). Its function is as follows. Part of the ABC transporter complex MetNIQ involved in methionine import. Responsible for energy coupling to the transport system. In Legionella pneumophila (strain Paris), this protein is Methionine import ATP-binding protein MetN.